A 339-amino-acid polypeptide reads, in one-letter code: Alpha-ketoglutarate-dependent dioxygenase btcD (339 aa).

Histidine 96 contributes to the substrate binding site. Fe cation-binding residues include histidine 140 and aspartate 142. 2-oxoglutarate is bound at residue threonine 173. The tract at residues 207-230 is disordered; it reads DGSDPKFQVPRGSPANVGTNLRPT. Fe cation is bound at residue histidine 302. Residues arginine 314 and arginine 318 each coordinate 2-oxoglutarate. Arginine 318 lines the substrate pocket.

Belongs to the TfdA dioxygenase family. The cofactor is Fe(2+).

It participates in secondary metabolite biosynthesis; terpenoid biosynthesis. Alpha-ketoglutarate-dependent dioxygenase; part of the gene cluster that mediates the biosynthesis of betaestacins. The bifunctional terpene synthase btcA converts isopentenyl diphosphate (IPP) and dimethylallyl diphosphate (DMAPP) into the sesterterpene betaestacin I. The C-terminal prenyltransferase (PT) domain of btcA catalyzes formation of GFPP, whereas the N-terminal terpene cyclase (TC) domain catalyzes the cyclization of GFPP into betaestacin I. The cytochrome P450 monooxygenase btcB is then responsible for the six-step oxidation of betaestacin I to yield betaestacin II. The roles of the cytochrome P450 monooxygenase btcC and the alpha-ketoglutarate-dependent dioxygenase btcD have not been identified yet. The chain is Alpha-ketoglutarate-dependent dioxygenase btcD from Neocamarosporium betae (Beet black rot fungus).